We begin with the raw amino-acid sequence, 231 residues long: uncharacterized protein (231 aa).

This is an uncharacterized protein from Escherichia coli (strain K12).